An 880-amino-acid chain; its full sequence is Alanine--tRNA ligase (880 aa).

Zn(2+) contacts are provided by His-569, His-573, Cys-671, and His-675.

This sequence belongs to the class-II aminoacyl-tRNA synthetase family. Homotetramer. The cofactor is Zn(2+).

It localises to the cytoplasm. It catalyses the reaction tRNA(Ala) + L-alanine + ATP = L-alanyl-tRNA(Ala) + AMP + diphosphate. Functionally, catalyzes the attachment of alanine to tRNA(Ala) in a two-step reaction: alanine is first activated by ATP to form Ala-AMP and then transferred to the acceptor end of tRNA(Ala). Also edits incorrectly charged Ser-tRNA(Ala) and Gly-tRNA(Ala) via its editing domain. The polypeptide is Alanine--tRNA ligase (Buchnera aphidicola subsp. Baizongia pistaciae (strain Bp)).